A 141-amino-acid chain; its full sequence is HTH-type transcriptional repressor NsrR (141 aa).

The 128-residue stretch at 2–129 folds into the HTH rrf2-type domain; the sequence is QLTNFTDFGL…DQHTIQDMLT (128 aa). The H-T-H motif DNA-binding region spans 28–51; that stretch reads ITVVTETFDVSRNHMVKIINKLGQ. [2Fe-2S] cluster-binding residues include Cys-91, Cys-96, and Cys-102.

[2Fe-2S] cluster serves as cofactor.

Its function is as follows. Nitric oxide-sensitive repressor of genes involved in protecting the cell against nitrosative stress. May require iron for activity. In Aliivibrio salmonicida (strain LFI1238) (Vibrio salmonicida (strain LFI1238)), this protein is HTH-type transcriptional repressor NsrR.